The chain runs to 762 residues: 5-methyltetrahydropteroyltriglutamate--homocysteine methyltransferase (762 aa).

5-methyltetrahydropteroyltri-L-glutamate is bound by residues 17-20 (REWK) and K111. Residues 435 to 437 (IGS) and E488 contribute to the L-homocysteine site. Residues 435–437 (IGS) and E488 contribute to the L-methionine site. Residues 519-520 (RC) and W565 each bind 5-methyltetrahydropteroyltri-L-glutamate. Residue D603 coordinates L-homocysteine. D603 serves as a coordination point for L-methionine. Position 609 (E609) interacts with 5-methyltetrahydropteroyltri-L-glutamate. Zn(2+) is bound by residues H645, C647, and E669. H698 (proton donor) is an active-site residue. C730 provides a ligand contact to Zn(2+).

Belongs to the vitamin-B12 independent methionine synthase family. Zn(2+) is required as a cofactor.

The enzyme catalyses 5-methyltetrahydropteroyltri-L-glutamate + L-homocysteine = tetrahydropteroyltri-L-glutamate + L-methionine. The protein operates within amino-acid biosynthesis; L-methionine biosynthesis via de novo pathway; L-methionine from L-homocysteine (MetE route): step 1/1. Catalyzes the transfer of a methyl group from 5-methyltetrahydrofolate to homocysteine resulting in methionine formation. The sequence is that of 5-methyltetrahydropteroyltriglutamate--homocysteine methyltransferase from Bacillus anthracis (strain CDC 684 / NRRL 3495).